Consider the following 66-residue polypeptide: Large ribosomal subunit protein bL35 (66 aa).

Basic residues predominate over residues 1-26 (MPKMKTHRGSAKRFKKTASGKLKRGH). Residues 1–28 (MPKMKTHRGSAKRFKKTASGKLKRGHAY) are disordered.

The protein belongs to the bacterial ribosomal protein bL35 family.

The chain is Large ribosomal subunit protein bL35 from Geobacillus thermodenitrificans (strain NG80-2).